The chain runs to 168 residues: CASP-like protein 1U1 (168 aa).

At 1–6 (MDGAAR) the chain is on the cytoplasmic side. The helical transmembrane segment at 7-27 (AVSLFFRIAVVGLSVAAAVVM) threads the bilayer. At 28–49 (ATASQAFPFNYGGAVSYTKYPA) the chain is on the extracellular side. The helical transmembrane segment at 50–70 (FVYFVVAAVVSAVCSAAALYL) threads the bilayer. The Cytoplasmic segment spans residues 71–80 (SVVREAAAGW). A helical transmembrane segment spans residues 81 to 101 (AVALLDVVTMGLLFSAAGAVF). The Extracellular portion of the chain corresponds to 102 to 138 (AVRRMAPLYLGVAGADTVAGRWVNGEFCHAAGAFCWR). Residues 139-159 (VTTSAIICAFAAAAVSVAVLT) traverse the membrane as a helical segment. Topologically, residues 160-168 (KGARHRGKH) are cytoplasmic.

It belongs to the Casparian strip membrane proteins (CASP) family. As to quaternary structure, homodimer and heterodimers.

The protein resides in the cell membrane. The polypeptide is CASP-like protein 1U1 (Oryza sativa subsp. japonica (Rice)).